We begin with the raw amino-acid sequence, 317 residues long: Olfactory receptor 2F2 (317 aa).

Topologically, residues 1–25 (MEIDNQTWVREFILLGLSSDWCTQI) are extracellular. Asparagine 5 carries an N-linked (GlcNAc...) asparagine glycan. Residues 26–49 (SLFSLFLVTYLMTVLGNCLIVLLI) traverse the membrane as a helical segment. Residues 50 to 57 (RLDSRLHT) lie on the Cytoplasmic side of the membrane. A helical transmembrane segment spans residues 58-79 (PMYFFLTNLSLVDVSYATSVVP). Residues 80-100 (QLLAHFLAEHKAIPFQSCAAQ) are Extracellular-facing. Cysteine 97 and cysteine 189 are oxidised to a cystine. Residues 101–120 (LFFSLALGGIEFVLLAVMAY) form a helical membrane-spanning segment. Over 121-139 (DRHVAVSDRLRYSAIMHGG) the chain is Cytoplasmic. A helical transmembrane segment spans residues 140 to 158 (LCARLAITSWVSGSINSLV). At 159 to 195 (QTAITFQLPMCTNKFIDHISCELLAVVRLACVDTSSN) the chain is on the extracellular side. Residues 196–219 (EAAIMVSSIVLLMTPFCLVLLSYI) form a helical membrane-spanning segment. Residues 220-236 (RIISTILKIQSREGRKK) are Cytoplasmic-facing. The chain crosses the membrane as a helical span at residues 237–259 (AFHTCASHLTVVALCYGTTIFTY). Topologically, residues 260-272 (IQPHSGPSVLQEK) are extracellular. A helical membrane pass occupies residues 273-292 (LISVFYAIVMPLLNPVIYSL). Over 293–317 (RNKEVKGAWHKLLEKFSGLTSKLGT) the chain is Cytoplasmic.

This sequence belongs to the G-protein coupled receptor 1 family.

The protein localises to the cell membrane. In terms of biological role, odorant receptor. The chain is Olfactory receptor 2F2 (OR2F2) from Homo sapiens (Human).